The following is a 213-amino-acid chain: Translation initiation factor IF-3 (213 aa).

The disordered stretch occupies residues 193-213 (EKIASLPPLPPDNSGEPEDDE).

It belongs to the IF-3 family. In terms of assembly, monomer.

The protein resides in the cytoplasm. In terms of biological role, IF-3 binds to the 30S ribosomal subunit and shifts the equilibrium between 70S ribosomes and their 50S and 30S subunits in favor of the free subunits, thus enhancing the availability of 30S subunits on which protein synthesis initiation begins. This chain is Translation initiation factor IF-3, found in Chlorobaculum tepidum (strain ATCC 49652 / DSM 12025 / NBRC 103806 / TLS) (Chlorobium tepidum).